The following is a 371-amino-acid chain: Queuine tRNA-ribosyltransferase (371 aa).

The active-site Proton acceptor is Asp-90. Residues 90–94, Asp-144, Gln-189, and Gly-215 contribute to the substrate site; that span reads DSGGF. Residues 246-252 form an RNA binding region; it reads GVGTPEN. Asp-265 acts as the Nucleophile in catalysis. The interval 270–274 is RNA binding; important for wobble base 34 recognition; the sequence is TRNAR. Cys-303, Cys-305, Cys-308, and His-334 together coordinate Zn(2+).

It belongs to the queuine tRNA-ribosyltransferase family. As to quaternary structure, homodimer. Within each dimer, one monomer is responsible for RNA recognition and catalysis, while the other monomer binds to the replacement base PreQ1. Zn(2+) is required as a cofactor.

It carries out the reaction 7-aminomethyl-7-carbaguanine + guanosine(34) in tRNA = 7-aminomethyl-7-carbaguanosine(34) in tRNA + guanine. It participates in tRNA modification; tRNA-queuosine biosynthesis. Functionally, catalyzes the base-exchange of a guanine (G) residue with the queuine precursor 7-aminomethyl-7-deazaguanine (PreQ1) at position 34 (anticodon wobble position) in tRNAs with GU(N) anticodons (tRNA-Asp, -Asn, -His and -Tyr). Catalysis occurs through a double-displacement mechanism. The nucleophile active site attacks the C1' of nucleotide 34 to detach the guanine base from the RNA, forming a covalent enzyme-RNA intermediate. The proton acceptor active site deprotonates the incoming PreQ1, allowing a nucleophilic attack on the C1' of the ribose to form the product. After dissociation, two additional enzymatic reactions on the tRNA convert PreQ1 to queuine (Q), resulting in the hypermodified nucleoside queuosine (7-(((4,5-cis-dihydroxy-2-cyclopenten-1-yl)amino)methyl)-7-deazaguanosine). This is Queuine tRNA-ribosyltransferase from Helicobacter pylori (strain G27).